A 578-amino-acid chain; its full sequence is MLRRLDKIRFRGHKRDDFLDLAESPNASDTECSDEIPLKVPRTSPRDSEELRDPAGPGTLIMATGVQDFNRTEFDRLNEIKGHLEIALLEKHFLQEELRKLREETNAEMLRQELDRERQRRMELEQKVQEVLKARTEEQMAQQPPKGQAQASNGAERRSQGLSSRLQKWFYERFGEYVEDFRFQPEENTVETEEPLSARRLTENMRRLKRGAKPVTNFVKNLSALSDWYSVYTSAIAFTVYMNAVWHGWAIPLFLFLAILRLSLNYLIARGWRIQWSIVPEVSEPVEPPKEDLTVSEKFQLVLDVAQKAQNLFGKMADILEKIKNLFMWVQPEITQKLYVALWAAFLASCFFPYRLVGLAVGLYAGIKFFLIDFIFKRCPRLRAKYDTPYIIWRSLPTDPQLKERSSAAVSRRLQTTSSRSYVPSAPAGLGKEEDAGRFHSTKKGNFHEIFNLTENERPLAVCENGWRCCLINRDRKMPTDYIRNGVLYVTENYLCFESSKSGSSKRNKVIKLVDITDIQKYKVLSVLPGSGMGIAVSTPSTQKPLVFGAMVHRDEAFETILSQYIKITSAAASGGDS.

Disordered stretches follow at residues 23–58 (ESPN…AGPG) and 136–159 (TEEQ…ERRS). Residues Ser24 and Ser28 each carry the phosphoserine modification. Basic and acidic residues predominate over residues 44–53 (SPRDSEELRD). Residues 83 to 143 (HLEIALLEKH…ARTEEQMAQQ (61 aa)) are a coiled coil. 3 consecutive transmembrane segments (helical) span residues 240-260 (VYMN…LAIL), 334-354 (ITQK…FFPY), and 356-376 (LVGL…DFIF). Positions 415-435 (QTTSSRSYVPSAPAGLGKEED) are disordered. Residues 445-523 (GNFHEIFNLT…VDITDIQKYK (79 aa)) form the GRAM domain.

As to quaternary structure, interacts with RTN4 (isoform B). As to expression, expressed in lung and in primary lung squamous cell carcinoma (LSCC).

It localises to the mitochondrion membrane. The protein localises to the endoplasmic reticulum membrane. Its function is as follows. Plays a role as a mediator of E2F1-induced apoptosis in the absence of p53/TP53. Plays a role as a mediator of E2F1-induced apoptosis in the absence of p53/TP53. Inhibits TLR9 response to nucelic acids and regulates TLR9-mediated innate immune response. This is GRAM domain-containing protein 4 from Homo sapiens (Human).